A 400-amino-acid chain; its full sequence is WW domain-containing transcription regulator protein 1 (400 aa).

Lys46 participates in a covalent cross-link: Glycyl lysine isopeptide (Lys-Gly) (interchain with G-Cter in ubiquitin). Residues 52-117 form a disordered region; the sequence is FFKEPDSGSH…QQHAHLRQQS (66 aa). The segment covering 61 to 70 has biased composition (polar residues); it reads HSRQSSTDSS. Residue Ser62 is modified to Phosphoserine. At Ser89 the chain carries Phosphoserine; by LATS2. The residue at position 105 (Ser105) is a Phosphoserine. Residues 124–157 enclose the WW domain; sequence LPLPPGWEMTFTATGQRYFLNHIEKITTWQDPRK. The tract at residues 222 to 400 is required for interaction with PALS1; it reads PNALTTQQQQ…NKSEPFLTWL (179 aa). Residues 225-259 are a coiled coil; the sequence is LTTQQQQQQKLRLQRIQMERERIRMRQEELMRQEA. At Ser295 the chain carries Phosphoserine. The residue at position 311 (Ser311) is a Phosphoserine; by LATS2. Residues 394-400 carry the PDZ-binding motif; the sequence is EPFLTWL.

In terms of assembly, binds to SLC9A3R2 via the PDZ motif at the plasma membrane. Binds to YWHAZ in vivo and in vitro through the phosphoserine-binding motif RSHSSP. Interacts (via coiled-coil domain) with SMAD2 (via MH1 domain), SMAD3 and SMAD4. Interacts with MED15. Interacts with PAX8 and NKX2-1. Interacts with TEAD1, TEAD2, TEAD3 and TEAD4. Interacts (via WW domain) with PALS1. Interacts with LATS1. Interacts with YAP1 (when phosphorylated at 'Ser-127'). Interacts (via WW domain) with PRRG4 (via cytoplasmic domain). Interacts (via WW domain) with AMOTL2 (via PPXY motif); the interaction promotes WWTR1/TAZ localization to the cytoplasm and tight junctions, thereby inhibiting its transcriptional coactivator properties. Interacts (via WW domain) with AMOT isoform 1; the interaction facilitates translocation of WWTR1/TAZ to the cytoplasm. Phosphorylated by LATS2 and STK3/MST2. Phosphorylation by LATS2 results in creation of 14-3-3 binding sites, retention in the cytoplasm, and functional inactivation. Phosphorylation results in the inhibition of transcriptional coactivation through YWHAZ-mediated nuclear export. Phosphorylated in the nucleus by PRP4K; phosphorylation leads to nuclear exclusion. Post-translationally, ubiquitinated at Lys-46; leading to proteasomal degradation. Deubiquitinated and stabilized by UCHL1 at Lys-46; leading to inhibition of osteoclastogenesis. In terms of tissue distribution, highly expressed in kidney, heart, placenta and lung. Expressed in the thyroid tissue.

Its subcellular location is the nucleus. It localises to the cytoplasm. The protein localises to the cell membrane. The protein resides in the cell junction. It is found in the tight junction. Transcriptional coactivator which acts as a downstream regulatory target in the Hippo signaling pathway that plays a pivotal role in organ size control and tumor suppression by restricting proliferation and promoting apoptosis. The core of this pathway is composed of a kinase cascade wherein STK3/MST2 and STK4/MST1, in complex with its regulatory protein SAV1, phosphorylates and activates LATS1/2 in complex with its regulatory protein MOB1, which in turn phosphorylates and inactivates YAP1 oncoprotein and WWTR1/TAZ. WWTR1 enhances PAX8 and NKX2-1/TTF1-dependent gene activation. In conjunction with YAP1, involved in the regulation of TGFB1-dependent SMAD2 and SMAD3 nuclear accumulation. Plays a key role in coupling SMADs to the transcriptional machinery such as the mediator complex. Regulates embryonic stem-cell self-renewal, promotes cell proliferation and epithelial-mesenchymal transition. This Homo sapiens (Human) protein is WW domain-containing transcription regulator protein 1.